The sequence spans 466 residues: Adenosylhomocysteinase (466 aa).

Substrate contacts are provided by Thr-57, Asp-132, and Glu-192. 193 to 195 serves as a coordination point for NAD(+); the sequence is TTT. Substrate contacts are provided by Lys-222 and Asp-226. Residues Asn-227, 256 to 261, Glu-279, Asn-314, 335 to 337, and Asn-380 each bind NAD(+); these read GYGDVG and IGH.

This sequence belongs to the adenosylhomocysteinase family. Requires NAD(+) as cofactor.

The protein localises to the cytoplasm. It carries out the reaction S-adenosyl-L-homocysteine + H2O = L-homocysteine + adenosine. Its pathway is amino-acid biosynthesis; L-homocysteine biosynthesis; L-homocysteine from S-adenosyl-L-homocysteine: step 1/1. In terms of biological role, may play a key role in the regulation of the intracellular concentration of adenosylhomocysteine. The polypeptide is Adenosylhomocysteinase (Chromobacterium violaceum (strain ATCC 12472 / DSM 30191 / JCM 1249 / CCUG 213 / NBRC 12614 / NCIMB 9131 / NCTC 9757 / MK)).